A 423-amino-acid polypeptide reads, in one-letter code: Putative competence-damage inducible protein (423 aa).

Belongs to the CinA family.

This is Putative competence-damage inducible protein from Streptococcus pyogenes serotype M12 (strain MGAS2096).